A 358-amino-acid chain; its full sequence is tRNA N6-adenosine threonylcarbamoyltransferase (358 aa).

His118 and His122 together coordinate Fe cation. Residues 143–147 (IVSGG), Asp176, Gly189, and Asn298 contribute to the substrate site. Asp326 serves as a coordination point for Fe cation.

This sequence belongs to the KAE1 / TsaD family. The cofactor is Fe(2+).

The protein localises to the cytoplasm. It carries out the reaction L-threonylcarbamoyladenylate + adenosine(37) in tRNA = N(6)-L-threonylcarbamoyladenosine(37) in tRNA + AMP + H(+). In terms of biological role, required for the formation of a threonylcarbamoyl group on adenosine at position 37 (t(6)A37) in tRNAs that read codons beginning with adenine. Is involved in the transfer of the threonylcarbamoyl moiety of threonylcarbamoyl-AMP (TC-AMP) to the N6 group of A37, together with TsaE and TsaB. TsaD likely plays a direct catalytic role in this reaction. The sequence is that of tRNA N6-adenosine threonylcarbamoyltransferase from Rhodopirellula baltica (strain DSM 10527 / NCIMB 13988 / SH1).